A 215-amino-acid polypeptide reads, in one-letter code: Large ribosomal subunit protein bL25 (215 aa).

The segment covering 192–203 (EEATEEEEEAAE) has biased composition (acidic residues). The interval 192 to 215 (EEATEEEEEAAEPEVIKRKEEEEE) is disordered. Residues 205–215 (EVIKRKEEEEE) show a composition bias toward basic and acidic residues.

It belongs to the bacterial ribosomal protein bL25 family. CTC subfamily. As to quaternary structure, part of the 50S ribosomal subunit; part of the 5S rRNA/L5/L18/L25 subcomplex. Contacts the 5S rRNA. Binds to the 5S rRNA independently of L5 and L18.

Its function is as follows. This is one of the proteins that binds to the 5S RNA in the ribosome where it forms part of the central protuberance. In Thermotoga sp. (strain RQ2), this protein is Large ribosomal subunit protein bL25.